The following is a 161-amino-acid chain: Ribosome maturation factor RimP (161 aa).

This sequence belongs to the RimP family.

The protein localises to the cytoplasm. Functionally, required for maturation of 30S ribosomal subunits. The polypeptide is Ribosome maturation factor RimP (Herminiimonas arsenicoxydans).